The sequence spans 216 residues: MTDSTQTPDIPLLDAVQARLLGCLVEKEATTPDTYPLTVNAAQSAANQKTAREPVMNIDAGGVQHALRQLETLGLARQHFSSRADRYEHRLQAALDLTRQQTVLLAQLLLRGPQTLGELVTRSERLHRFADADEARHAIERLQQRALLVVLPRASGQREDRYMHLLCGEVDGAALAAKYASSGGGSEAADPGLAERVAQLEAAVAELQAQLAELRG.

Belongs to the UPF0502 family.

This chain is UPF0502 protein Smal_0052, found in Stenotrophomonas maltophilia (strain R551-3).